The chain runs to 547 residues: T-complex protein 1 subunit alpha (547 aa).

This sequence belongs to the TCP-1 chaperonin family. Heterooligomeric complex of about 850 to 900 kDa that forms two stacked rings, 12 to 16 nm in diameter.

It localises to the cytoplasm. Functionally, molecular chaperone; assists the folding of proteins upon ATP hydrolysis. Known to play a role, in vitro, in the folding of actin and tubulin. This is T-complex protein 1 subunit alpha from Tetrahymena pyriformis.